The following is a 170-amino-acid chain: TFIIB-type zinc finger protein (170 aa).

A TFIIB-type zinc finger spans residues 1–30 (MECPVCGSNEIVWDNKNGEVVCSNCGIIID). The Zn(2+) site is built by Cys-3, Cys-6, Cys-22, and Cys-25.

The protein belongs to the TFIIB family. Requires Zn(2+) as cofactor.

This chain is TFIIB-type zinc finger protein, found in Saccharolobus shibatae (strain ATCC 51178 / DSM 5389 / JCM 8931 / NBRC 15437 / B12) (Sulfolobus shibatae).